Consider the following 214-residue polypeptide: MNLLIMGPPGGGKGTQCEVLVRELKITHISTGDMFRENVKGGTELGLKAKEYMDAGQLVPDELVVAMVKDRLSKPDCANGFLLDGFPRTVPQAEALDATLKDMGIILDAVLNIAVPRGKLLDRLTGRRVCRVCGATFHVLFNAPKEDGKCDKCGGELYQRSDDTEATVNQRLDVYEAQTQPLIEYYGKQGLLKEINGDQEIGKVTQDLLASLGR.

Glycine 10 to threonine 15 is a binding site for ATP. The segment at serine 30–valine 59 is NMP. AMP-binding positions include threonine 31, arginine 36, glutamine 57–valine 59, glycine 85–arginine 88, and glutamine 92. Residues glycine 126 to aspartate 163 are LID. Residue arginine 127 coordinates ATP. Positions 130 and 133 each coordinate Zn(2+). Threonine 136–phenylalanine 137 is an ATP binding site. Positions 150 and 153 each coordinate Zn(2+). Arginine 160 and arginine 171 together coordinate AMP. ATP is bound at residue glutamine 199.

It belongs to the adenylate kinase family. Monomer.

It is found in the cytoplasm. It carries out the reaction AMP + ATP = 2 ADP. It participates in purine metabolism; AMP biosynthesis via salvage pathway; AMP from ADP: step 1/1. In terms of biological role, catalyzes the reversible transfer of the terminal phosphate group between ATP and AMP. Plays an important role in cellular energy homeostasis and in adenine nucleotide metabolism. This chain is Adenylate kinase, found in Desulforudis audaxviator (strain MP104C).